The primary structure comprises 139 residues: Putative pre-16S rRNA nuclease (139 aa).

This sequence belongs to the YqgF nuclease family.

It localises to the cytoplasm. Its function is as follows. Could be a nuclease involved in processing of the 5'-end of pre-16S rRNA. The polypeptide is Putative pre-16S rRNA nuclease (Rubrobacter xylanophilus (strain DSM 9941 / JCM 11954 / NBRC 16129 / PRD-1)).